The following is a 428-amino-acid chain: Mitochondrial import inner membrane translocase subunit TIM50-C (428 aa).

A helical transmembrane segment spans residues 59–79 (LFTCTALPAAAPALFSILHTA). Residues 80–428 (RGYSSTTKQE…KQWSRNILGR (349 aa)) lie on the Mitochondrial intermembrane side of the membrane. The tract at residues 112 to 138 (FPQTSPEVDSNAEQERKKREEEEEKEN) is disordered. Positions 124-138 (EQERKKREEEEEKEN) are enriched in basic and acidic residues. Residues 224–367 (YVQPRYTLVL…LDLIAFLKII (144 aa)) form the FCP1 homology domain.

The protein belongs to the TIM50 family. In terms of assembly, component of the TIM23 complex at least composed of Tim23, Tim17 (Tim17a1, Tim17a2 or Tim17b1) and a Tim50.

It is found in the mitochondrion inner membrane. In terms of biological role, essential component of the TIM23 complex, a complex that mediates the translocation of transit peptide-containing proteins across the mitochondrial inner membrane. This Drosophila melanogaster (Fruit fly) protein is Mitochondrial import inner membrane translocase subunit TIM50-C (ttm50).